The sequence spans 453 residues: Zinc finger CCCH domain-containing protein 26 (453 aa).

Positions 1 to 15 (MSETQQQVQNSTGSI) are enriched in polar residues. A disordered region spans residues 1–47 (MSETQQQVQNSTGSIRSPDKIEDTFRRMKVNEDNMEQSSPYPDRPGE). Serine 2 carries the N-acetylserine modification. Over residues 17-32 (SPDKIEDTFRRMKVNE) the composition is skewed to basic and acidic residues. C3H1-type zinc fingers lie at residues 44 to 72 (RPGE…HPLT), 95 to 112 (ETGA…HPKD), 129 to 157 (RQGE…HPHP), 261 to 289 (FSER…HPKE), and 307 to 335 (RPGQ…HSML). The span at 360-379 (STNLRISSPPSPSDMTTLSN) shows a compositional bias: polar residues. Residues 360–453 (STNLRISSPP…KVQDSSDKST (94 aa)) form a disordered region. The span at 391–407 (ETEKQDDSPTEPEKSEV) shows a compositional bias: basic and acidic residues. Over residues 413-422 (PNGSDSTSLP) the composition is skewed to polar residues. Residues 441–453 (DSSKVQDSSDKST) show a composition bias toward basic and acidic residues.

The protein localises to the nucleus. This chain is Zinc finger CCCH domain-containing protein 26 (ZFN2), found in Arabidopsis thaliana (Mouse-ear cress).